Consider the following 171-residue polypeptide: Peptide deformylase (171 aa).

Fe cation-binding residues include C91 and H133. The active site involves E134. H137 serves as a coordination point for Fe cation.

It belongs to the polypeptide deformylase family. Requires Fe(2+) as cofactor.

It catalyses the reaction N-terminal N-formyl-L-methionyl-[peptide] + H2O = N-terminal L-methionyl-[peptide] + formate. Its function is as follows. Removes the formyl group from the N-terminal Met of newly synthesized proteins. Requires at least a dipeptide for an efficient rate of reaction. N-terminal L-methionine is a prerequisite for activity but the enzyme has broad specificity at other positions. The chain is Peptide deformylase from Sodalis glossinidius (strain morsitans).